The primary structure comprises 424 residues: Imidazolonepropionase (424 aa).

H85 and H87 together coordinate Fe(3+). Residues H85 and H87 each contribute to the Zn(2+) site. Residues R94, Y157, and H190 each coordinate 4-imidazolone-5-propanoate. Y157 is a binding site for N-formimidoyl-L-glutamate. Residue H255 participates in Fe(3+) binding. Residue H255 participates in Zn(2+) binding. 4-imidazolone-5-propanoate is bound at residue E258. Residue D329 coordinates Fe(3+). Residue D329 coordinates Zn(2+). N-formimidoyl-L-glutamate-binding residues include N331 and G333. S334 provides a ligand contact to 4-imidazolone-5-propanoate.

The protein belongs to the metallo-dependent hydrolases superfamily. HutI family. Zn(2+) is required as a cofactor. The cofactor is Fe(3+).

Its subcellular location is the cytoplasm. It catalyses the reaction 4-imidazolone-5-propanoate + H2O = N-formimidoyl-L-glutamate. The protein operates within amino-acid degradation; L-histidine degradation into L-glutamate; N-formimidoyl-L-glutamate from L-histidine: step 3/3. Catalyzes the hydrolytic cleavage of the carbon-nitrogen bond in imidazolone-5-propanoate to yield N-formimidoyl-L-glutamate. It is the third step in the universal histidine degradation pathway. The polypeptide is Imidazolonepropionase (Brevibacillus brevis (strain 47 / JCM 6285 / NBRC 100599)).